Consider the following 95-residue polypeptide: Ferredoxin-like protein FixX (95 aa).

Belongs to the bacterial-type ferredoxin family. FixX subfamily.

Functionally, could be part of an electron transfer system required for anaerobic carnitine reduction. Could be a 3Fe-4S cluster-containing protein. This Shigella flexneri protein is Ferredoxin-like protein FixX (fixX).